Here is a 200-residue protein sequence, read N- to C-terminus: Prophage tail fiber assembly protein homolog TfaE (200 aa).

It belongs to the tfa family.

The polypeptide is Prophage tail fiber assembly protein homolog TfaE (tfaE) (Escherichia coli (strain K12)).